Consider the following 175-residue polypeptide: B9 domain-containing protein 2 (175 aa).

The 117-residue stretch at 2–118 (AEVHVIGQII…DCPTWRPLGS (117 aa)) folds into the C2 B9-type domain.

The protein belongs to the B9D family. As to quaternary structure, part of the tectonic-like complex (also named B9 complex). Interacts with TUBG1.

It localises to the cytoplasm. It is found in the cytoskeleton. The protein resides in the cilium basal body. The protein localises to the cilium axoneme. Its subcellular location is the nucleus. Functionally, component of the tectonic-like complex, a complex localized at the transition zone of primary cilia and acting as a barrier that prevents diffusion of transmembrane proteins between the cilia and plasma membranes. The polypeptide is B9 domain-containing protein 2 (B9d2) (Rattus norvegicus (Rat)).